A 578-amino-acid chain; its full sequence is Type I restriction enzyme MjaVIII methylase subunit (578 aa).

Residues 250–255, 280–282, Glu303, and 332–333 each bind S-adenosyl-L-methionine; these read EVYTPI, SGS, and DS.

The protein belongs to the N(4)/N(6)-methyltransferase family. The type I restriction/modification system is composed of three polypeptides R, M and S.

It carries out the reaction a 2'-deoxyadenosine in DNA + S-adenosyl-L-methionine = an N(6)-methyl-2'-deoxyadenosine in DNA + S-adenosyl-L-homocysteine + H(+). In terms of biological role, the subtype gamma methyltransferase (M) subunit of a type I restriction enzyme. The M and S subunits together form a methyltransferase (MTase) that methylates A-2 on the top and A-3 on the bottom strand of the sequence 5'-GAYN(5)GTAA-3'. In the presence of the R subunit the complex can also act as an endonuclease, binding to the same target sequence but cutting the DNA some distance from this site. Whether the DNA is cut or modified depends on the methylation state of the target sequence. When the target site is unmodified, the DNA is cut. When the target site is hemimethylated, the complex acts as a maintenance MTase modifying the DNA so that both strands become methylated. After locating a non-methylated recognition site, the enzyme complex serves as a molecular motor that translocates DNA in an ATP-dependent manner until a collision occurs that triggers cleavage. The protein is Type I restriction enzyme MjaVIII methylase subunit of Methanocaldococcus jannaschii (strain ATCC 43067 / DSM 2661 / JAL-1 / JCM 10045 / NBRC 100440) (Methanococcus jannaschii).